Consider the following 396-residue polypeptide: Tryptophan synthase beta chain (396 aa).

Lys86 carries the post-translational modification N6-(pyridoxal phosphate)lysine.

The protein belongs to the TrpB family. In terms of assembly, tetramer of two alpha and two beta chains. Requires pyridoxal 5'-phosphate as cofactor.

It catalyses the reaction (1S,2R)-1-C-(indol-3-yl)glycerol 3-phosphate + L-serine = D-glyceraldehyde 3-phosphate + L-tryptophan + H2O. It participates in amino-acid biosynthesis; L-tryptophan biosynthesis; L-tryptophan from chorismate: step 5/5. Functionally, the beta subunit is responsible for the synthesis of L-tryptophan from indole and L-serine. This chain is Tryptophan synthase beta chain, found in Francisella tularensis subsp. holarctica (strain FTNF002-00 / FTA).